A 671-amino-acid polypeptide reads, in one-letter code: UvrABC system protein B (671 aa).

In terms of domain architecture, Helicase ATP-binding spans 25–412 (EGIDAGLAHQ…AGRIVEQVVR (388 aa)). 38 to 45 (GVTGSGKT) provides a ligand contact to ATP. Residues 91–114 (YYDYYQPEAYVPSSDTFIEKDASI) carry the Beta-hairpin motif. One can recognise a Helicase C-terminal domain in the interval 429–582 (QVDDLLSEIH…QIAFNLEHGI (154 aa)). The interval 601–625 (PGSRSKKRKGMAKAAEESARYENEL) is disordered. Residues 614 to 625 (AAEESARYENEL) show a composition bias toward basic and acidic residues. The UVR domain maps to 632 to 667 (NKRIRQLEEKMYQLARDLEFEAAAQMRDEIGKLRER).

The protein belongs to the UvrB family. In terms of assembly, forms a heterotetramer with UvrA during the search for lesions. Interacts with UvrC in an incision complex.

It is found in the cytoplasm. The UvrABC repair system catalyzes the recognition and processing of DNA lesions. A damage recognition complex composed of 2 UvrA and 2 UvrB subunits scans DNA for abnormalities. Upon binding of the UvrA(2)B(2) complex to a putative damaged site, the DNA wraps around one UvrB monomer. DNA wrap is dependent on ATP binding by UvrB and probably causes local melting of the DNA helix, facilitating insertion of UvrB beta-hairpin between the DNA strands. Then UvrB probes one DNA strand for the presence of a lesion. If a lesion is found the UvrA subunits dissociate and the UvrB-DNA preincision complex is formed. This complex is subsequently bound by UvrC and the second UvrB is released. If no lesion is found, the DNA wraps around the other UvrB subunit that will check the other stand for damage. The sequence is that of UvrABC system protein B from Pseudomonas syringae pv. tomato (strain ATCC BAA-871 / DC3000).